A 549-amino-acid polypeptide reads, in one-letter code: Glucose-6-phosphate isomerase (549 aa).

Residues lysine 80, lysine 228, and lysine 234 each carry the N6-acetyllysine modification. Glutamate 355 functions as the Proton donor in the catalytic mechanism. Active-site residues include histidine 386 and lysine 514.

Belongs to the GPI family.

Its subcellular location is the cytoplasm. The enzyme catalyses alpha-D-glucose 6-phosphate = beta-D-fructose 6-phosphate. The protein operates within carbohydrate biosynthesis; gluconeogenesis. Its pathway is carbohydrate degradation; glycolysis; D-glyceraldehyde 3-phosphate and glycerone phosphate from D-glucose: step 2/4. In terms of biological role, catalyzes the reversible isomerization of glucose-6-phosphate to fructose-6-phosphate. The chain is Glucose-6-phosphate isomerase from Escherichia coli O127:H6 (strain E2348/69 / EPEC).